Reading from the N-terminus, the 249-residue chain is Acetylglutamate kinase (249 aa).

Substrate contacts are provided by residues 36–37 (GG), Arg-58, and Asn-147.

This sequence belongs to the acetylglutamate kinase family. ArgB subfamily.

The protein localises to the cytoplasm. It catalyses the reaction N-acetyl-L-glutamate + ATP = N-acetyl-L-glutamyl 5-phosphate + ADP. It participates in amino-acid biosynthesis; L-arginine biosynthesis; N(2)-acetyl-L-ornithine from L-glutamate: step 2/4. Its function is as follows. Catalyzes the ATP-dependent phosphorylation of N-acetyl-L-glutamate. The protein is Acetylglutamate kinase of Thermus thermophilus (strain ATCC 27634 / DSM 579 / HB8).